The sequence spans 89 residues: uncharacterized protein (89 aa).

The segment at 31–89 (TPQPLEPHEHPKPMEPNEFDPKPDDPPRNPDPSPFPNEVPKPKPSDFPIPDELYPQPIV) is disordered. The segment covering 36–58 (EPHEHPKPMEPNEFDPKPDDPPR) has biased composition (basic and acidic residues). Over residues 59 to 69 (NPDPSPFPNEV) the composition is skewed to pro residues.

This is an uncharacterized protein from Dictyostelium discoideum (Social amoeba).